A 310-amino-acid chain; its full sequence is Deoxypodophyllotoxin synthase (310 aa).

One can recognise a Fe2OG dioxygenase domain in the interval 159 to 258; it reads STNYLLHFMR…RLSTSSFSFP (100 aa). Residues histidine 184, aspartate 186, and histidine 239 each coordinate Fe cation. Residue arginine 249 coordinates 2-oxoglutarate.

The protein belongs to the iron/ascorbate-dependent oxidoreductase family. Requires Fe(2+) as cofactor. Mostly expressed in leaves and stems.

It carries out the reaction (-)-yatein + 2-oxoglutarate + O2 = (-)-deoxypodophyllotoxin + succinate + CO2 + H2O. The protein operates within aromatic compound metabolism; phenylpropanoid biosynthesis. Functionally, 2-oxoglutarate-dependent dioxygenase involved in the biosynthesis of etoposide, a chemotherapeutic compound of the topoisomerase inhibitor family. Catalyzes the conversion of yatein to deoxypodophyllotoxin. Can also use, to some extent, demethylyatein as substrate. This is Deoxypodophyllotoxin synthase from Sinopodophyllum hexandrum (Himalayan may apple).